Here is a 156-residue protein sequence, read N- to C-terminus: rRNA methyltransferase (156 aa).

Functionally, modifies 16S rRNA so making ribosomes resistant to certain aminoglycosides. The protein is rRNA methyltransferase (kamC) of Saccharopolyspora hirsuta.